A 100-amino-acid chain; its full sequence is Cytochrome c2 iso-1 (100 aa).

Cys-11, Cys-14, His-15, and Met-76 together coordinate heme c.

The protein belongs to the cytochrome c family. In terms of processing, binds 1 heme c group covalently per subunit.

Its function is as follows. Cytochrome c2 is found mainly in purple, non-sulfur, photosynthetic bacteria where it functions as the electron donor to the oxidized bacteriochlorophyll in the photophosphorylation pathway. However, it may also have a role in the respiratory chain and is found in some non-photosynthetic bacteria. This Magnetospirillum molischianum (Rhodospirillum molischianum) protein is Cytochrome c2 iso-1.